A 279-amino-acid chain; its full sequence is Orotidine 5'-phosphate decarboxylase (279 aa).

Substrate is bound by residues Asp-8, Lys-30, 58–67, Thr-117, Arg-177, Gln-186, Gly-206, and Arg-207; that span reads DLKIHDIPNT. Lys-60 (proton donor) is an active-site residue.

It belongs to the OMP decarboxylase family. Type 1 subfamily. In terms of assembly, homodimer.

It catalyses the reaction orotidine 5'-phosphate + H(+) = UMP + CO2. It functions in the pathway pyrimidine metabolism; UMP biosynthesis via de novo pathway; UMP from orotate: step 2/2. In terms of biological role, catalyzes the decarboxylation of orotidine 5'-monophosphate (OMP) to uridine 5'-monophosphate (UMP). This chain is Orotidine 5'-phosphate decarboxylase, found in Campylobacter jejuni (strain RM1221).